A 435-amino-acid chain; its full sequence is 3-phosphoshikimate 1-carboxyvinyltransferase (435 aa).

Residues Lys21, Ser22, and Arg26 each contribute to the 3-phosphoshikimate site. Lys21 contributes to the phosphoenolpyruvate binding site. 2 residues coordinate phosphoenolpyruvate: Gly99 and Arg127. Ser173, Gln175, Asp323, and Lys350 together coordinate 3-phosphoshikimate. Gln175 serves as a coordination point for phosphoenolpyruvate. Asp323 acts as the Proton acceptor in catalysis. Positions 354 and 396 each coordinate phosphoenolpyruvate.

It belongs to the EPSP synthase family. As to quaternary structure, monomer.

It is found in the cytoplasm. It carries out the reaction 3-phosphoshikimate + phosphoenolpyruvate = 5-O-(1-carboxyvinyl)-3-phosphoshikimate + phosphate. It participates in metabolic intermediate biosynthesis; chorismate biosynthesis; chorismate from D-erythrose 4-phosphate and phosphoenolpyruvate: step 6/7. In terms of biological role, catalyzes the transfer of the enolpyruvyl moiety of phosphoenolpyruvate (PEP) to the 5-hydroxyl of shikimate-3-phosphate (S3P) to produce enolpyruvyl shikimate-3-phosphate and inorganic phosphate. This Akkermansia muciniphila (strain ATCC BAA-835 / DSM 22959 / JCM 33894 / BCRC 81048 / CCUG 64013 / CIP 107961 / Muc) protein is 3-phosphoshikimate 1-carboxyvinyltransferase.